A 90-amino-acid chain; its full sequence is Conotoxin Vc22.1 (90 aa).

The signal sequence occupies residues 1–18 (MMTRVFLAMFFLLVLTKG).

It belongs to the E superfamily. Contains 4 disulfide bonds. As to expression, expressed by the venom duct.

The protein resides in the secreted. This is Conotoxin Vc22.1 from Conus victoriae (Queen Victoria cone).